A 50-amino-acid polypeptide reads, in one-letter code: PhoP/PhoQ regulator MgrB (50 aa).

The Cytoplasmic portion of the chain corresponds to 1–4 (MLDL). A helical transmembrane segment spans residues 5 to 27 (NITKLVTTVVIIAACCLFYLLAL). The Periplasmic segment spans residues 28–50 (DSYCDQGGTFSTGICAITTIVPW).

This sequence belongs to the MgrB family. In terms of assembly, probably interacts with the periplasmic domain of PhoQ.

It localises to the cell inner membrane. PhoP-regulated transcription is redox-sensitive, being activated when the periplasm becomes more reducing. MgrB acts between DsbA/DsbB and PhoP/PhoQ in this pathway. Represses PhoP/PhoQ signaling, possibly by binding to the periplasmic domain of PhoQ, altering its activity and that of downstream effector PhoP. The chain is PhoP/PhoQ regulator MgrB from Yersinia pestis.